A 426-amino-acid chain; its full sequence is COMPASS component SWD1 (426 aa).

5 WD repeats span residues 24–63, 70–109, 212–251, 264–307, and 310–350; these read ENPL…PICV, AHVR…KPLK, ITSS…ENSA, INKL…LVRV, and GAEE…KWSA. Residues arginine 236 and lysine 266 each coordinate DNA.

In terms of assembly, component of the Set1C/COMPASS complex which consists of SET1(2), BRE2(2), SPP1(2), SDC1(1), SHG1(1), SWD1(1), SWD2(1), and SWD3(1).

The protein localises to the nucleus. Its subcellular location is the chromosome. It is found in the telomere. Component of the Set1C/COMPASS complex that specifically mono-, di- and trimethylates histone H3 to form H3K4me1/2/3, which subsequently plays a role in telomere length maintenance and transcription elongation regulation. COMPASS recognizes ubiquitinated H2B on one face of the nucleosome which stimulates the methylation of H3 on the opposing face. SWD1/CPS50 acts as an assembly and regulatory hub for COMPASS complex formation. Serves as a highly utilized surface for COMPASS interaction with the nucleosome. This Saccharomyces cerevisiae (strain ATCC 204508 / S288c) (Baker's yeast) protein is COMPASS component SWD1.